Reading from the N-terminus, the 176-residue chain is Warthog protein 5 (176 aa).

A signal peptide spans 1-21; the sequence is MCSMWLMASWLMAFVAGSTLA. Residue N70 is glycosylated (N-linked (GlcNAc...) asparagine).

In terms of tissue distribution, expressed in seam cells, excretory cell, reproductive system, pharynx, pharyngeal-intestinal valve cells, neurons and neuronal support cells.

It is found in the secreted. Functionally, intercellular signal essential for a variety of patterning events during development. This is Warthog protein 5 (wrt-5) from Caenorhabditis elegans.